We begin with the raw amino-acid sequence, 490 residues long: Tryptophan 5-hydroxylase 2 (490 aa).

S19 carries the phosphoserine modification. The interval 34 to 62 (LTLNKANSGKNDDKGNKGSSKNETATESG) is disordered. Over residues 50 to 62 (KGSSKNETATESG) the composition is skewed to polar residues. In terms of domain architecture, ACT spans 65-140 (AVVFSLKNEV…TIVTLNPPEN (76 aa)). H318, H323, and E363 together coordinate Fe cation.

This sequence belongs to the biopterin-dependent aromatic amino acid hydroxylase family. As to quaternary structure, interacts with DNAJC12. Fe(2+) is required as a cofactor.

It carries out the reaction (6R)-L-erythro-5,6,7,8-tetrahydrobiopterin + L-tryptophan + O2 = 5-hydroxy-L-tryptophan + (4aS,6R)-4a-hydroxy-L-erythro-5,6,7,8-tetrahydrobiopterin. It participates in aromatic compound metabolism; serotonin biosynthesis; serotonin from L-tryptophan: step 1/2. The protein is Tryptophan 5-hydroxylase 2 (TPH2) of Macaca mulatta (Rhesus macaque).